Here is a 2283-residue protein sequence, read N- to C-terminus: AT-rich interactive domain-containing protein 1A (2283 aa).

The span at 1-10 shows a compositional bias: low complexity; that stretch reads MAAQVAPAAA. Disordered regions lie at residues 1-333, 346-822, and 979-1006; these read MAAQ…PADM, AAAA…LPNA, and ATKM…TTTN. N-acetylalanine is present on A2. A compositionally biased stretch (basic and acidic residues) spans 22-34; sequence ELKKAEQQQREEA. Phosphoserine is present on residues S56 and S77. Over residues 77–93 the composition is skewed to gly residues; that stretch reads SNGGGGGGGAGSGGGPG. Low complexity-rich tracts occupy residues 128 to 143 and 233 to 266; these read SSSD…AAAA and SSPR…SSSS. A Phosphoserine modification is found at S234. Residues 274–287 show a composition bias toward gly residues; the sequence is AMGGGGPSAAGGGT. Phosphothreonine is present on T287. The LXXLL signature appears at 296–300; that stretch reads LNQLL. The segment covering 296-307 has biased composition (polar residues); sequence LNQLLTSPSSAR. A Phosphoserine modification is found at S302. The span at 311–328 shows a compositional bias: gly residues; sequence GYPGGDYGGGPQDGGAGK. A phosphoserine mark is found at S365 and S384. The segment covering 402–427 has biased composition (low complexity); that stretch reads PYSQQQGPPSGPQQGHGYPGQPYGSQ. An Asymmetric dimethylarginine modification is found at R431. 2 stretches are compositionally biased toward polar residues: residues 438 to 451 and 459 to 470; these read GRAQ…SYAQ and QGPSAYGQQGQT. Low complexity-rich tracts occupy residues 471–547 and 554–596; these read PYYN…QHPQ and QPQA…YSQQ. Position 605 is a phosphoserine (S605). Over residues 611–622 the composition is skewed to low complexity; the sequence is SQASSAPSMTSS. A compositionally biased stretch (polar residues) spans 629 to 638; that stretch reads MNLSLQSRPS. Low complexity predominate over residues 659–675; the sequence is SPGVSTSGISSSQGEQS. Over residues 676 to 686 the composition is skewed to polar residues; that stretch reads NPAQSPFSPHT. A phosphoserine mark is found at S697, S699, S703, S731, S765, and S773. 2 stretches are compositionally biased toward polar residues: residues 731-748 and 756-794; these read SGQS…SSIA and RNPQ…QNSM. Low complexity predominate over residues 795–822; it reads GSYGPQGSQYGPQGGYPRQPNYNALPNA. Positions 1018-1109 constitute an ARID domain; the sequence is EPERKMWVDR…CLYAFECKIE (92 aa). Disordered regions lie at residues 1114–1484 and 1539–1636; these read PPPD…MMGG and RANH…PPMI. A compositionally biased stretch (low complexity) spans 1142–1155; sequence MQGPQTPQSTSSSM. The span at 1163–1178 shows a compositional bias: pro residues; sequence PPTPASTPHSQIPPLP. S1185 is modified (phosphoserine). Polar residues predominate over residues 1198–1220; the sequence is PTFQKRNSMTPNPGYQPSMNTSD. Residue S1236 is modified to Phosphoserine. R1277 carries the omega-N-methylarginine modification. The span at 1343-1368 shows a compositional bias: low complexity; the sequence is QFSTQGTPSSSPFPSQQTTMYQQQQQ. A Nuclear localization signal motif is present at residues 1369–1388; sequence NYKRPMDGTYGPPAKRHEGE. Positions 1395–1426 are enriched in low complexity; it reads SAGQGQPQQQQLPAAQSQPASQPQAAQPSPQQ. 2 stretches are compositionally biased toward polar residues: residues 1427 to 1436 and 1469 to 1478; these read DVYNQYSNAY and PGSSAQQNMP. Over residues 1555 to 1579 the composition is skewed to pro residues; it reads PYGPSAPVPPMTRPPPSNYQPPPSM. S1605 is subject to Phosphoserine. K1613 bears the N6-acetyllysine mark. The LXXLL signature appears at 1710–1714; that stretch reads LPGLL. Disordered stretches follow at residues 1757–1782, 1872–1904, and 1917–1941; these read PAHT…GVGN, CPTP…PEKR, and SSTL…PFGI. Residues 1761–1782 show a composition bias toward acidic residues; it reads EEEEEEHLDPKLEEEEEEGVGN. Residues T1874 and T1886 each carry the phosphothreonine modification. The span at 1882–1893 shows a compositional bias: low complexity; the sequence is TVEGTPGTTEQE. Residue K1903 is modified to N6-acetyllysine. Residues 1923–1935 are compositionally biased toward basic and acidic residues; the sequence is EGAKSAEATKESS. Phosphoserine occurs at positions 1927 and 1942. Short sequence motifs (LXXLL) lie at residues 1965–1969 and 2083–2087; these read LCTLL and LDGLL.

As to quaternary structure, component of SWI/SNF chromatin remodeling complexes, in some of which it can be mutually exclusive with ARID1B/BAF250B. The canonical complex contains a catalytic subunit (either SMARCA4/BRG1/BAF190A or SMARCA2/BRM/BAF190B) and at least SMARCE1, ACTL6A/BAF53, SMARCC1/BAF155, SMARCC2/BAF170, and SMARCB1/SNF5/BAF47. Other subunits specific to each of the complexes may also be present permitting several possible combinations developmentally and tissue specific. Component of the BAF (SWI/SNF-A) complex, which includes at least actin (ACTB), ARID1A/BAF250A, ARID1B/BAF250B, SMARCA2/BRM, SMARCA4/BRG1/BAF190A, ACTL6A/BAF53, ACTL6B/BAF53B, SMARCE1/BAF57, SMARCC1/BAF155, SMARCC2/BAF170, SMARCB1/SNF5/INI1, and one or more SMARCD1/BAF60A, SMARCD2/BAF60B, or SMARCD3/BAF60C. In muscle cells, the BAF complex also contains DPF3. Component of neural progenitors-specific chromatin remodeling complex (npBAF complex) composed of at least, ARID1A/BAF250A or ARID1B/BAF250B, SMARCD1/BAF60A, SMARCD3/BAF60C, SMARCA2/BRM/BAF190B, SMARCA4/BRG1/BAF190A, SMARCB1/BAF47, SMARCC1/BAF155, SMARCE1/BAF57, SMARCC2/BAF170, PHF10/BAF45A, ACTL6A/BAF53A and actin. Component of neuron-specific chromatin remodeling complex (nBAF complex) composed of at least, ARID1A/BAF250A or ARID1B/BAF250B, SMARCD1/BAF60A, SMARCD3/BAF60C, SMARCA2/BRM/BAF190B, SMARCA4/BRG1/BAF190A, SMARCB1/BAF47, SMARCC1/BAF155, SMARCE1/BAF57, SMARCC2/BAF170, DPF1/BAF45B, DPF3/BAF45C, ACTL6B/BAF53B and actin. Component of a SWI/SNF-like EBAFa complex, at least composed of SMARCA4/BRG1/BAF190A, SMARCB1/BAF47/SNF5, ACTL6A/BAF53A, SMARCE1/BAF57, SMARCD1/BAF60A, SMARCC1/BAF155, SMARCC2/BAF170, BAF250A and MLLT1/ENL. Interacts through its C-terminus with SMARCA2/BRM/BAF190B and SMARCA4/BRG1/BAF190A. Interacts with SMARCC1/BAF155. Interacts with FOS (via bZIP domain and leucine-zipper region), FOSB isoform 1 and 2, FOSL1 and FOSL2. As to expression, widely expressed. Expressed at high levels in the testis.

The protein resides in the nucleus. Involved in transcriptional activation and repression of select genes by chromatin remodeling (alteration of DNA-nucleosome topology). Component of SWI/SNF chromatin remodeling complexes that carry out key enzymatic activities, changing chromatin structure by altering DNA-histone contacts within a nucleosome in an ATP-dependent manner. Binds DNA non-specifically. Belongs to the neural progenitors-specific chromatin remodeling complex (npBAF complex) and the neuron-specific chromatin remodeling complex (nBAF complex). During neural development a switch from a stem/progenitor to a postmitotic chromatin remodeling mechanism occurs as neurons exit the cell cycle and become committed to their adult state. The transition from proliferating neural stem/progenitor cells to postmitotic neurons requires a switch in subunit composition of the npBAF and nBAF complexes. As neural progenitors exit mitosis and differentiate into neurons, npBAF complexes which contain ACTL6A/BAF53A and PHF10/BAF45A, are exchanged for homologous alternative ACTL6B/BAF53B and DPF1/BAF45B or DPF3/BAF45C subunits in neuron-specific complexes (nBAF). The npBAF complex is essential for the self-renewal/proliferative capacity of the multipotent neural stem cells. The nBAF complex along with CREST plays a role regulating the activity of genes essential for dendrite growth. This chain is AT-rich interactive domain-containing protein 1A (Arid1a), found in Mus musculus (Mouse).